Reading from the N-terminus, the 275-residue chain is N-acetyltransferase YodP (275 aa).

Positions 125–271 constitute an N-acetyltransferase domain; sequence FTMRKAETND…AEGLENMNIW (147 aa).

It belongs to the acetyltransferase family.

It catalyses the reaction (3S)-3,6-diaminohexanoate + acetyl-CoA = (3S)-6-acetamido-3-aminohexanoate + CoA + H(+). Its function is as follows. In vitro, is able to catalyze the acetylation of beta-lysine to N6-acetyl-beta-lysine, an archaeal osmolyte produced by methanogenic archaea. Its physiological function has not yet been elucidated. This is N-acetyltransferase YodP (yodP) from Bacillus subtilis (strain 168).